Reading from the N-terminus, the 131-residue chain is Sec-independent protein translocase protein TatB (131 aa).

Residues 2–22 traverse the membrane as a helical segment; it reads FDGIGFMELLLIGIVGLVVLG. Polar residues predominate over residues 86–95; the sequence is LKEAAQSVNR. Residues 86–131 are disordered; that stretch reads LKEAAQSVNRPYQVEDVPAAKDVPAKEMPTSETSTATNANSDKPNG. Positions 115 to 131 are enriched in low complexity; the sequence is TSETSTATNANSDKPNG.

The protein belongs to the TatB family. As to quaternary structure, the Tat system comprises two distinct complexes: a TatABC complex, containing multiple copies of TatA, TatB and TatC subunits, and a separate TatA complex, containing only TatA subunits. Substrates initially bind to the TatABC complex, which probably triggers association of the separate TatA complex to form the active translocon.

It localises to the cell inner membrane. Part of the twin-arginine translocation (Tat) system that transports large folded proteins containing a characteristic twin-arginine motif in their signal peptide across membranes. Together with TatC, TatB is part of a receptor directly interacting with Tat signal peptides. TatB may form an oligomeric binding site that transiently accommodates folded Tat precursor proteins before their translocation. The polypeptide is Sec-independent protein translocase protein TatB (Shewanella halifaxensis (strain HAW-EB4)).